The chain runs to 431 residues: Serine/threonine-protein kinase Sgk1 (431 aa).

Residues 1–60 are necessary for localization to the mitochondria; that stretch reads MTVKAEAARSTLTYSRMRGMVAILIAFMKQRRMGLNDFIQKIASNTYACKHAEVQSILKM. The segment at 65–92 is disordered; the sequence is EPELMNANPSPPPSPSQQINLGPSSNPH. At Ser74 the chain carries Phosphoserine. Ser78 is modified (phosphoserine; by MAPK7). Positions 81-91 are enriched in polar residues; sequence QQINLGPSSNP. Positions 98–355 constitute a Protein kinase domain; sequence FHFLKVIGKG…FMEIKSHIFF (258 aa). ATP-binding positions include 104 to 112 and Lys127; that span reads IGKGSFGKV. A Nuclear localization signal motif is present at residues 131 to 141; sequence KKAILKKKEEK. Catalysis depends on Asp222, which acts as the Proton acceptor. Position 256 is a phosphothreonine; by PDPK1 (Thr256). Residues 356-431 enclose the AGC-kinase C-terminal domain; that stretch reads SLINWDDLIN…SYAPPVDSFL (76 aa). Thr369 is subject to Phosphothreonine; by PKA. A phosphoserine mark is found at Ser397, Ser401, and Ser422.

The protein belongs to the protein kinase superfamily. AGC Ser/Thr protein kinase family. In terms of assembly, homodimer; disulfide-linked. Interacts with MAPK3/ERK1, MAPK1/ERK2, MAP2K1/MEK1, MAP2K2/MEK2, NEDD4, NEDD4L, MAPT/TAU, MAPK7, CREB1, SLC9A3R2/NHERF2 and KCNJ1/ROMK1. Forms a trimeric complex with FBXW7 and NOTCH1 Associates with the mammalian target of rapamycin complex 2 (mTORC2) via an interaction with MAPKAP1/SIN1. Post-translationally, regulated by phosphorylation. Activated by phosphorylation on Ser-422 by mTORC2, transforming it into a substrate for PDPK1 which phosphorylates it on Thr-256. Phosphorylation on Ser-397 and Ser-401 are also essential for its activity. Phosphorylation on Ser-78 by MAPK7 is required for growth factor-induced cell cycle progression. In terms of processing, ubiquitinated by NEDD4L; which promotes proteasomal degradation. Ubiquitinated by SYVN1 at the endoplasmic reticulum; which promotes rapid proteasomal degradation and maintains a high turnover rate in resting cells.

Its subcellular location is the cytoplasm. The protein resides in the nucleus. It is found in the endoplasmic reticulum membrane. The protein localises to the cell membrane. It localises to the mitochondrion. The enzyme catalyses L-seryl-[protein] + ATP = O-phospho-L-seryl-[protein] + ADP + H(+). It catalyses the reaction L-threonyl-[protein] + ATP = O-phospho-L-threonyl-[protein] + ADP + H(+). Two specific sites, one in the kinase domain (Thr-256) and the other in the C-terminal regulatory region (Ser-422), need to be phosphorylated for its full activation. Phosphorylation at Ser-397 and Ser-401 are also essential for its activity. Activated by WNK1, WNK2, WNK3 and WNK4; which promote phosphorylation by mTORC2. Serine/threonine-protein kinase which is involved in the regulation of a wide variety of ion channels, membrane transporters, cellular enzymes, transcription factors, neuronal excitability, cell growth, proliferation, survival, migration and apoptosis. Plays an important role in cellular stress response. Contributes to regulation of renal Na(+) retention, renal K(+) elimination, salt appetite, gastric acid secretion, intestinal Na(+)/H(+) exchange and nutrient transport, insulin-dependent salt sensitivity of blood pressure, salt sensitivity of peripheral glucose uptake, cardiac repolarization and memory consolidation. Up-regulates Na(+) channels: SCNN1A/ENAC, SCN5A and ASIC1/ACCN2, K(+) channels: KCNJ1/ROMK1, KCNA1-5, KCNQ1-5 and KCNE1, epithelial Ca(2+) channels: TRPV5 and TRPV6, chloride channels: BSND, CLCN2 and CFTR, glutamate transporters: SLC1A3/EAAT1, SLC1A2 /EAAT2, SLC1A1/EAAT3, SLC1A6/EAAT4 and SLC1A7/EAAT5, amino acid transporters: SLC1A5/ASCT2, SLC38A1/SN1 and SLC6A19, creatine transporter: SLC6A8, Na(+)/dicarboxylate cotransporter: SLC13A2/NADC1, Na(+)-dependent phosphate cotransporter: SLC34A2/NAPI-2B, glutamate receptor: GRIK2/GLUR6. Up-regulates carriers: SLC9A3/NHE3, SLC12A1/NKCC2, SLC12A3/NCC, SLC5A3/SMIT, SLC2A1/GLUT1, SLC5A1/SGLT1 and SLC15A2/PEPT2. Regulates enzymes: GSK3A/B, PMM2 and Na(+)/K(+) ATPase, and transcription factors: CTNNB1 and nuclear factor NF-kappa-B. Stimulates sodium transport into epithelial cells by enhancing the stability and expression of SCNN1A/ENAC. This is achieved by phosphorylating the NEDD4L ubiquitin E3 ligase, promoting its interaction with 14-3-3 proteins, thereby preventing it from binding to SCNN1A/ENAC and targeting it for degradation. Regulates store-operated Ca(+2) entry (SOCE) by stimulating ORAI1 and STIM1. Regulates KCNJ1/ROMK1 directly via its phosphorylation or indirectly via increased interaction with SLC9A3R2/NHERF2. Phosphorylates MDM2 and activates MDM2-dependent ubiquitination of p53/TP53. Phosphorylates MAPT/TAU and mediates microtubule depolymerization and neurite formation in hippocampal neurons. Phosphorylates SLC2A4/GLUT4 and up-regulates its activity. Phosphorylates APBB1/FE65 and promotes its localization to the nucleus. Phosphorylates MAPK1/ERK2 and activates it by enhancing its interaction with MAP2K1/MEK1 and MAP2K2/MEK2. Phosphorylates FBXW7 and plays an inhibitory role in the NOTCH1 signaling. Phosphorylates FOXO1 resulting in its relocalization from the nucleus to the cytoplasm. Phosphorylates FOXO3, promoting its exit from the nucleus and interference with FOXO3-dependent transcription. Phosphorylates BRAF and MAP3K3/MEKK3 and inhibits their activity. Phosphorylates SLC9A3/NHE3 in response to dexamethasone, resulting in its activation and increased localization at the cell membrane. Phosphorylates CREB1. Necessary for vascular remodeling during angiogenesis. This chain is Serine/threonine-protein kinase Sgk1 (Sgk1), found in Mus musculus (Mouse).